The sequence spans 199 residues: Fe/S biogenesis protein NfuA (199 aa).

Residues Cys151 and Cys154 each coordinate [4Fe-4S] cluster.

This sequence belongs to the NfuA family. In terms of assembly, homodimer. The cofactor is [4Fe-4S] cluster.

Its function is as follows. Involved in iron-sulfur cluster biogenesis. Binds a 4Fe-4S cluster, can transfer this cluster to apoproteins, and thereby intervenes in the maturation of Fe/S proteins. Could also act as a scaffold/chaperone for damaged Fe/S proteins. In Xanthomonas campestris pv. campestris (strain 8004), this protein is Fe/S biogenesis protein NfuA.